The chain runs to 682 residues: DNA-directed RNA polymerase subunit beta' (682 aa).

Positions 69, 71, 87, and 90 each coordinate Zn(2+). Positions 491, 493, and 495 each coordinate Mg(2+).

It belongs to the RNA polymerase beta' chain family. RpoC1 subfamily. In plastids the minimal PEP RNA polymerase catalytic core is composed of four subunits: alpha, beta, beta', and beta''. When a (nuclear-encoded) sigma factor is associated with the core the holoenzyme is formed, which can initiate transcription. Mg(2+) serves as cofactor. The cofactor is Zn(2+).

The protein resides in the plastid. The protein localises to the chloroplast. The catalysed reaction is RNA(n) + a ribonucleoside 5'-triphosphate = RNA(n+1) + diphosphate. Functionally, DNA-dependent RNA polymerase catalyzes the transcription of DNA into RNA using the four ribonucleoside triphosphates as substrates. The polypeptide is DNA-directed RNA polymerase subunit beta' (Lotus japonicus (Lotus corniculatus var. japonicus)).